The sequence spans 155 residues: Regulatory protein RecX (155 aa).

This sequence belongs to the RecX family.

It is found in the cytoplasm. In terms of biological role, modulates RecA activity. In Pseudomonas fluorescens (strain SBW25), this protein is Regulatory protein RecX.